We begin with the raw amino-acid sequence, 368 residues long: Peptide chain release factor 2 (368 aa).

N5-methylglutamine is present on glutamine 251.

This sequence belongs to the prokaryotic/mitochondrial release factor family. Post-translationally, methylated by PrmC. Methylation increases the termination efficiency of RF2.

It is found in the cytoplasm. Peptide chain release factor 2 directs the termination of translation in response to the peptide chain termination codons UGA and UAA. The protein is Peptide chain release factor 2 of Wolinella succinogenes (strain ATCC 29543 / DSM 1740 / CCUG 13145 / JCM 31913 / LMG 7466 / NCTC 11488 / FDC 602W) (Vibrio succinogenes).